Consider the following 267-residue polypeptide: 5'-nucleotidase SurE (267 aa).

Asp-9, Asp-10, Ser-40, and Asn-97 together coordinate a divalent metal cation.

This sequence belongs to the SurE nucleotidase family. A divalent metal cation serves as cofactor.

Its subcellular location is the cytoplasm. It catalyses the reaction a ribonucleoside 5'-phosphate + H2O = a ribonucleoside + phosphate. Its function is as follows. Nucleotidase that shows phosphatase activity on nucleoside 5'-monophosphates. In Helicobacter pylori (strain P12), this protein is 5'-nucleotidase SurE.